Here is a 309-residue protein sequence, read N- to C-terminus: NAD kinase (309 aa).

The active-site Proton acceptor is the D89. NAD(+) contacts are provided by residues 89–90 (DG), 163–164 (NE), H174, R191, D193, and 204–209 (TAYALS).

The protein belongs to the NAD kinase family. A divalent metal cation is required as a cofactor.

It is found in the cytoplasm. The enzyme catalyses NAD(+) + ATP = ADP + NADP(+) + H(+). Its function is as follows. Involved in the regulation of the intracellular balance of NAD and NADP, and is a key enzyme in the biosynthesis of NADP. Catalyzes specifically the phosphorylation on 2'-hydroxyl of the adenosine moiety of NAD to yield NADP. In Shewanella baltica (strain OS185), this protein is NAD kinase.